We begin with the raw amino-acid sequence, 104 residues long: MSTYAIIKTGGKQVKVEVGQAIYVEKIDAEAGAEVTFNEVVLVGGDKTVVGTPIVEGATVVGTVEKQGKQKKVVTFKYKPKKGSHRKQGHRQPYTKIVIDAINA.

The protein belongs to the bacterial ribosomal protein bL21 family. In terms of assembly, part of the 50S ribosomal subunit. Contacts protein L20.

Functionally, this protein binds to 23S rRNA in the presence of protein L20. The protein is Large ribosomal subunit protein bL21 of Streptococcus uberis (strain ATCC BAA-854 / 0140J).